Consider the following 273-residue polypeptide: Proteasome subunit beta type-7-A (273 aa).

The propeptide at 1–37 (MSQSTVDVPPKGGFSFDLCKRNDMLTQKGLKAPSFLK) is removed in mature form. Thr40 (nucleophile) is an active-site residue.

Belongs to the peptidase T1B family. In terms of assembly, component of the 20S core complex of the 26S proteasome. The 26S proteasome is composed of a core protease (CP), known as the 20S proteasome, capped at one or both ends by the 19S regulatory particle (RP/PA700). The 20S proteasome core is composed of 28 subunits that are arranged in four stacked rings, resulting in a barrel-shaped structure. The two end rings are each formed by seven alpha subunits, and the two central rings are each formed by seven beta subunits. The catalytic chamber with the active sites is on the inside of the barrel.

The protein resides in the cytoplasm. It is found in the nucleus. The enzyme catalyses Cleavage of peptide bonds with very broad specificity.. Functionally, the proteasome is a multicatalytic proteinase complex which is characterized by its ability to cleave peptides with Arg, Phe, Tyr, Leu, and Glu adjacent to the leaving group at neutral or slightly basic pH. The proteasome has an ATP-dependent proteolytic activity. The chain is Proteasome subunit beta type-7-A (PBB1) from Arabidopsis thaliana (Mouse-ear cress).